A 90-amino-acid polypeptide reads, in one-letter code: Conotoxin Ca8.2 (90 aa).

The N-terminal stretch at 1–21 (MMLKMGAMFVLLLLFILPSSQ) is a signal peptide. Positions 22-46 (QEGDVQARKTHLKRGFYGTLAMSTR) are excised as a propeptide. Gln89 bears the Glutamine amide mark.

It belongs to the conotoxin S superfamily. In terms of processing, contains 5 disulfide bonds. Expressed by the venom duct.

The protein resides in the secreted. The sequence is that of Conotoxin Ca8.2 from Conus caracteristicus (Characteristic cone).